The chain runs to 265 residues: 5'-nucleotidase SurE (265 aa).

Asp8, Asp9, Ser41, and Asn100 together coordinate a divalent metal cation.

The protein belongs to the SurE nucleotidase family. Requires a divalent metal cation as cofactor.

Its subcellular location is the cytoplasm. The catalysed reaction is a ribonucleoside 5'-phosphate + H2O = a ribonucleoside + phosphate. Its function is as follows. Nucleotidase that shows phosphatase activity on nucleoside 5'-monophosphates. The chain is 5'-nucleotidase SurE from Brevibacillus brevis (strain 47 / JCM 6285 / NBRC 100599).